Here is a 294-residue protein sequence, read N- to C-terminus: UPF0761 membrane protein YPTB0027 (294 aa).

7 consecutive transmembrane segments (helical) span residues 44–64, 67–87, 108–128, 136–156, 185–205, 212–232, and 246–266; these read LLSLVPLITVIFALFAAFPMF, ISIKLKAFIFANFMPATGDII, GLIVTALLLIYSVDSVLNIIW, LVFSFAVYWMVLTLGPILVGA, VFPLLISWVSFWLLYSVVPTV, ALIGALVAALLFELGKKGFAM, and VLAVIPILFLWVYWSWCIVLL.

Belongs to the UPF0761 family.

It localises to the cell inner membrane. This is UPF0761 membrane protein YPTB0027 from Yersinia pseudotuberculosis serotype I (strain IP32953).